Reading from the N-terminus, the 132-residue chain is Small ribosomal subunit protein uS8 (132 aa).

Belongs to the universal ribosomal protein uS8 family. Part of the 30S ribosomal subunit. Contacts proteins S5 and S12.

In terms of biological role, one of the primary rRNA binding proteins, it binds directly to 16S rRNA central domain where it helps coordinate assembly of the platform of the 30S subunit. This is Small ribosomal subunit protein uS8 from Clostridium beijerinckii (strain ATCC 51743 / NCIMB 8052) (Clostridium acetobutylicum).